The sequence spans 361 residues: Probable mannitol dehydrogenase (361 aa).

Zn(2+)-binding residues include Cys51, His73, Cys104, Cys107, Cys110, Cys118, and Cys167.

This sequence belongs to the zinc-containing alcohol dehydrogenase family. Zn(2+) is required as a cofactor.

It carries out the reaction D-mannitol + NAD(+) = D-mannose + NADH + H(+). In terms of biological role, oxidizes mannitol to mannose. Provides the initial step by which translocated mannitol is committed to central metabolism and, by regulating mannitol pool size, is important in regulating salt tolerance at the cellular level. The polypeptide is Probable mannitol dehydrogenase (ELI3) (Mesembryanthemum crystallinum (Common ice plant)).